We begin with the raw amino-acid sequence, 441 residues long: Nucleoprotein (441 aa).

Residue S5 is modified to Phosphoserine; by host. In terms of domain architecture, CoV N NTD spans 14-136 (VPLSLYAPLR…QLPSVVEIVE (123 aa)). Residues 16-146 (LSLYAPLRVT…PNTPPASRAN (131 aa)) are RNA-binding. 2 disordered regions span residues 131 to 219 (VVEI…VTSR) and 231 to 278 (KSLG…LKDI). S143 carries the post-translational modification Phosphoserine; by host. Positions 143 to 215 (SRANSRSRSR…NRNQSNDRGG (73 aa)) are enriched in low complexity. Composition is skewed to basic and acidic residues over residues 238-255 (NPDR…KSDN) and 269-278 (TSKERDLKDI). One can recognise a CoV N CTD domain in the interval 266–382 (SRATSKERDL…AFKTGNAKLQ (117 aa)). Residues 277–379 (DIPEWRRIPK…QVDAFKTGNA (103 aa)) form a dimerization region.

This sequence belongs to the alphacoronavirus nucleocapsid protein family. Homooligomer. Both monomeric and oligomeric forms interact with RNA. Interacts with protein M. Interacts with NSP3; this interaction serves to tether the genome to the newly translated replicase-transcriptase complex at a very early stage of infection. Interacts with host RSAD2; this interaction inhibits viral replication. In terms of processing, ADP-ribosylated. The ADP-ribosylation is retained in the virion during infection. Phosphorylated on serine and threonine residues.

Its subcellular location is the virion. It localises to the host endoplasmic reticulum-Golgi intermediate compartment. The protein localises to the host Golgi apparatus. Packages the positive strand viral genome RNA into a helical ribonucleocapsid (RNP) and plays a fundamental role during virion assembly through its interactions with the viral genome and membrane protein M. Plays an important role in enhancing the efficiency of subgenomic viral RNA transcription as well as viral replication. The chain is Nucleoprotein from Porcine epidemic diarrhea virus (strain CV777) (PEDV).